A 377-amino-acid chain; its full sequence is MDSIVDDAIDEAEDMGDGSAEVGGPTDINRSGTMTDDELQAVLKDLQTNITVVGCGGAGGNTVNRMHEEGIKGAKLVAANTDVQHLVEIGADTKILMGEQKTQGRGAGSLPQVGEEAALESQEEIYDAIEGSDMVFVTAGLGGGTGTGSAPVVAKAARESGALTIAIVTTPFTAEGEVRRTNAEAGLERLRDVSDTVIVVPNDRLLDAVGKLPVRQAFKVSDEVLMRSVKGITELITKPGLVNLDFADVKTVMERGGVAMIGLGESDSESKAQESVKSALRSPLLDVDISGANSALVNVTGGSDMSIEEAEGVVEEIYDRIDPDARIIWGTSVDDELEGMMRTMIVVTGVESPQIYGRNGEVQAQAEGRLEDIDYVE.

Over residues 1–16 the composition is skewed to acidic residues; it reads MDSIVDDAIDEAEDMG. The interval 1–33 is disordered; it reads MDSIVDDAIDEAEDMGDGSAEVGGPTDINRSGT. GTP is bound by residues 57 to 61, 144 to 146, glutamate 175, arginine 179, and aspartate 222; these read GAGGN and GTG.

Belongs to the FtsZ family. As to quaternary structure, homodimer. Polymerizes to form a dynamic ring structure in a strictly GTP-dependent manner. Interacts directly with several other division proteins.

It localises to the cytoplasm. Essential cell division protein that forms a contractile ring structure (Z ring) at the future cell division site. The regulation of the ring assembly controls the timing and the location of cell division. One of the functions of the FtsZ ring is to recruit other cell division proteins to the septum to produce a new cell wall between the dividing cells. Binds GTP and shows GTPase activity. The sequence is that of Cell division protein FtsZ from Haloferax mediterranei (strain ATCC 33500 / DSM 1411 / JCM 8866 / NBRC 14739 / NCIMB 2177 / R-4) (Halobacterium mediterranei).